Here is a 90-residue protein sequence, read N- to C-terminus: Probable Fe(2+)-trafficking protein (90 aa).

The protein belongs to the Fe(2+)-trafficking protein family. As to quaternary structure, monomer.

In terms of biological role, could be a mediator in iron transactions between iron acquisition and iron-requiring processes, such as synthesis and/or repair of Fe-S clusters in biosynthetic enzymes. This chain is Probable Fe(2+)-trafficking protein, found in Yersinia pseudotuberculosis serotype O:1b (strain IP 31758).